The following is a 337-amino-acid chain: Bifunctional methylenetetrahydrofolate dehydrogenase/cyclohydrolase, mitochondrial (337 aa).

The N-terminal 30 residues, 1–30, are a transit peptide targeting the mitochondrion; sequence MATALCPLRALGQTAFRPRTRRLHLSAPRA. Residues 79–83 and 126–128 each bind substrate; these read YVLNK and VQL. Residues 195 to 197 and arginine 228 each bind NAD(+); that span reads GRS. 304 to 308 serves as a coordination point for substrate; the sequence is PGGVG.

Belongs to the tetrahydrofolate dehydrogenase/cyclohydrolase family. Mg(2+) serves as cofactor.

It is found in the mitochondrion. The enzyme catalyses (6R)-5,10-methylene-5,6,7,8-tetrahydrofolate + NAD(+) = (6R)-5,10-methenyltetrahydrofolate + NADH. It catalyses the reaction (6R)-5,10-methenyltetrahydrofolate + H2O = (6R)-10-formyltetrahydrofolate + H(+). Although its dehydrogenase activity is NAD-specific, it can also utilize NADP at a reduced efficiency. The protein is Bifunctional methylenetetrahydrofolate dehydrogenase/cyclohydrolase, mitochondrial (MTHFD2) of Gallus gallus (Chicken).